The following is a 482-amino-acid chain: UDP-N-acetylmuramate--L-alanine ligase (482 aa).

Residue 111–117 (GTHGKTT) coordinates ATP.

Belongs to the MurCDEF family.

The protein localises to the cytoplasm. It carries out the reaction UDP-N-acetyl-alpha-D-muramate + L-alanine + ATP = UDP-N-acetyl-alpha-D-muramoyl-L-alanine + ADP + phosphate + H(+). It participates in cell wall biogenesis; peptidoglycan biosynthesis. Cell wall formation. In Symbiobacterium thermophilum (strain DSM 24528 / JCM 14929 / IAM 14863 / T), this protein is UDP-N-acetylmuramate--L-alanine ligase.